The primary structure comprises 396 residues: Acetyl-CoA acetyltransferase ERG10, cytosolic (396 aa).

Residue cysteine 91 is the Acyl-thioester intermediate of the active site. Residue tyrosine 186 participates in K(+) binding. Positions 227 and 230 each coordinate CoA. Residues alanine 246, proline 247, and valine 347 each coordinate K(+). Active-site proton acceptor residues include histidine 351 and cysteine 381. Asparagine 382 lines the chloride pocket.

The protein belongs to the thiolase-like superfamily. Thiolase family. As to quaternary structure, homotetramer. Requires K(+) as cofactor.

The protein localises to the cytoplasm. It is found in the cytosol. The catalysed reaction is 2 acetyl-CoA = acetoacetyl-CoA + CoA. It participates in metabolic intermediate biosynthesis; (R)-mevalonate biosynthesis; (R)-mevalonate from acetyl-CoA: step 1/3. Functionally, acetyl-CoA acetyltransferase; part of the first module of ergosterol biosynthesis pathway that includes the early steps of the pathway, conserved across all eukaryotes, and which results in the formation of mevalonate from acetyl-coenzyme A (acetyl-CoA). ERG10B catalyzes the formation of acetoacetyl-CoA from acetyl-CoA. The first module starts with the action of the cytosolic acetyl-CoA acetyltransferase ERG10B that catalyzes the formation of acetoacetyl-CoA. The hydroxymethylglutaryl-CoA synthases ERG13 then condenses acetyl-CoA with acetoacetyl-CoA to form HMG-CoA. The rate-limiting step of the early module is the reduction to mevalonate by the 3-hydroxy-3-methylglutaryl-coenzyme A (HMG-CoA) reductases HMG1. The sequence is that of Acetyl-CoA acetyltransferase ERG10, cytosolic from Gibberella zeae (strain ATCC MYA-4620 / CBS 123657 / FGSC 9075 / NRRL 31084 / PH-1) (Wheat head blight fungus).